Reading from the N-terminus, the 167-residue chain is Peptide deformylase (167 aa).

2 residues coordinate Fe cation: cysteine 91 and histidine 133. Glutamate 134 is an active-site residue. Residue histidine 137 coordinates Fe cation.

Belongs to the polypeptide deformylase family. The cofactor is Fe(2+).

The catalysed reaction is N-terminal N-formyl-L-methionyl-[peptide] + H2O = N-terminal L-methionyl-[peptide] + formate. Its function is as follows. Removes the formyl group from the N-terminal Met of newly synthesized proteins. Requires at least a dipeptide for an efficient rate of reaction. N-terminal L-methionine is a prerequisite for activity but the enzyme has broad specificity at other positions. This Neisseria gonorrhoeae (strain ATCC 700825 / FA 1090) protein is Peptide deformylase.